A 338-amino-acid polypeptide reads, in one-letter code: Tagatose 1,6-diphosphate aldolase (338 aa).

Belongs to the aldolase LacD family.

It catalyses the reaction D-tagatofuranose 1,6-bisphosphate = D-glyceraldehyde 3-phosphate + dihydroxyacetone phosphate. Its pathway is carbohydrate metabolism; D-tagatose 6-phosphate degradation; D-glyceraldehyde 3-phosphate and glycerone phosphate from D-tagatose 6-phosphate: step 2/2. The sequence is that of Tagatose 1,6-diphosphate aldolase from Listeria monocytogenes serotype 4b (strain CLIP80459).